The primary structure comprises 382 residues: Ribosomal RNA large subunit methyltransferase G (382 aa).

Belongs to the methyltransferase superfamily. RlmG family.

The protein localises to the cytoplasm. It catalyses the reaction guanosine(1835) in 23S rRNA + S-adenosyl-L-methionine = N(2)-methylguanosine(1835) in 23S rRNA + S-adenosyl-L-homocysteine + H(+). Functionally, specifically methylates the guanine in position 1835 (m2G1835) of 23S rRNA. This is Ribosomal RNA large subunit methyltransferase G from Aliivibrio salmonicida (strain LFI1238) (Vibrio salmonicida (strain LFI1238)).